We begin with the raw amino-acid sequence, 468 residues long: Argininosuccinate lyase (468 aa).

The protein belongs to the lyase 1 family. Argininosuccinate lyase subfamily.

The protein resides in the cytoplasm. It catalyses the reaction 2-(N(omega)-L-arginino)succinate = fumarate + L-arginine. It participates in amino-acid biosynthesis; L-arginine biosynthesis; L-arginine from L-ornithine and carbamoyl phosphate: step 3/3. This is Argininosuccinate lyase from Hahella chejuensis (strain KCTC 2396).